The chain runs to 182 residues: ATP-dependent protease subunit HslV (182 aa).

The active site involves threonine 12. Positions 167, 170, and 173 each coordinate Na(+).

It belongs to the peptidase T1B family. HslV subfamily. A double ring-shaped homohexamer of HslV is capped on each side by a ring-shaped HslU homohexamer. The assembly of the HslU/HslV complex is dependent on binding of ATP.

The protein localises to the cytoplasm. The catalysed reaction is ATP-dependent cleavage of peptide bonds with broad specificity.. Its activity is regulated as follows. Allosterically activated by HslU binding. Its function is as follows. Protease subunit of a proteasome-like degradation complex believed to be a general protein degrading machinery. The sequence is that of ATP-dependent protease subunit HslV from Chlorobium luteolum (strain DSM 273 / BCRC 81028 / 2530) (Pelodictyon luteolum).